A 339-amino-acid polypeptide reads, in one-letter code: Dihydroorotate dehydrogenase (quinone) (339 aa).

Residues 61–65 and T85 each bind FMN; that span reads AGLDK. A substrate-binding site is contributed by K65. Residue 110-114 coordinates substrate; sequence NRMGF. N138 and N171 together coordinate FMN. Residue N171 coordinates substrate. The active-site Nucleophile is S174. N176 lines the substrate pocket. K216 and T244 together coordinate FMN. 245-246 serves as a coordination point for substrate; it reads NT. FMN contacts are provided by residues G267, G296, and 317–318; that span reads YS.

Belongs to the dihydroorotate dehydrogenase family. Type 2 subfamily. Monomer. Requires FMN as cofactor.

The protein localises to the cell membrane. It carries out the reaction (S)-dihydroorotate + a quinone = orotate + a quinol. Its pathway is pyrimidine metabolism; UMP biosynthesis via de novo pathway; orotate from (S)-dihydroorotate (quinone route): step 1/1. Functionally, catalyzes the conversion of dihydroorotate to orotate with quinone as electron acceptor. The polypeptide is Dihydroorotate dehydrogenase (quinone) (Pseudomonas fluorescens (strain Pf0-1)).